Reading from the N-terminus, the 289-residue chain is ATP synthase gamma chain (289 aa).

This sequence belongs to the ATPase gamma chain family. F-type ATPases have 2 components, CF(1) - the catalytic core - and CF(0) - the membrane proton channel. CF(1) has five subunits: alpha(3), beta(3), gamma(1), delta(1), epsilon(1). CF(0) has three main subunits: a, b and c.

The protein resides in the cell inner membrane. Produces ATP from ADP in the presence of a proton gradient across the membrane. The gamma chain is believed to be important in regulating ATPase activity and the flow of protons through the CF(0) complex. This Haemophilus influenzae (strain PittGG) protein is ATP synthase gamma chain.